A 495-amino-acid chain; its full sequence is WD repeat-containing protein 37 (495 aa).

A disordered region spans residues 1–34 (MPTESGSWAAARQTKQKRKSHSLSIKRTNSSEQD). Positions 22–31 (SLSIKRTNSS) are enriched in polar residues. 2 WD repeats span residues 154 to 194 (GHRD…CLIK) and 197 to 236 (GHAGSVNSIKFHPTEQIALTASGDQTAHIWRYMVQLPTPQ). The interval 237–268 (PMADTSQISGEEEVDFSDKDENDGDGDASSDC) is disordered. A compositionally biased stretch (acidic residues) spans 246-264 (GEEEVDFSDKDENDGDGDA). WD repeat units follow at residues 280–319 (SHQGVVIAADWLVGGKQAVTASWDRTANLYDVETSELVHS), 322–361 (GHDQELTHCCTHPTQRLVVTSSRDTTFRLWDFRDPSIHSV), 366–404 (GHTDTVTSAVFTVGDNVVSGSDDRTVKVWDLKNMRSPIA), 407–446 (RTDSAVNRISVSVGQRIIALPHDNRQVRLFDISGVRLARL), and 453–494 (GHRR…LLQE).

It localises to the cytoplasm. The protein localises to the nucleus. In Xenopus laevis (African clawed frog), this protein is WD repeat-containing protein 37 (wdr37).